We begin with the raw amino-acid sequence, 95 residues long: UPF0473 protein BPUM_2377 (95 aa).

Belongs to the UPF0473 family.

The chain is UPF0473 protein BPUM_2377 from Bacillus pumilus (strain SAFR-032).